A 198-amino-acid polypeptide reads, in one-letter code: Syndecan-4 (198 aa).

The N-terminal stretch at 1–18 is a signal peptide; sequence MAPARLFALLLFFVGGVA. The Extracellular segment spans residues 19-145; it reads ESIRETEVID…QGSNIFERTE (127 aa). O-linked (Xyl...) (glycosaminoglycan) serine glycans are attached at residues serine 39, serine 61, and serine 63. Serine 95 carries O-linked (Xyl...) (chondroitin sulfate) serine glycosylation. The chain crosses the membrane as a helical span at residues 146–170; that stretch reads VLAALIVGGIVGILFAVFLILLLMY. The Cytoplasmic segment spans residues 171 to 198; sequence RMKKKDEGSYDLGKKPIYKKAPTNEFYA.

The protein belongs to the syndecan proteoglycan family. Homodimer. Interacts (via its cytoplasmic domain) with GIPC (via its PDZ domain). Interacts (via its cytoplasmic domain) with NUDT16L1. Interacts with CDCP1 and SDCBP. Interacts with DNM2; this interaction is markedly enhanced at focal ahesion site upon induction of focal adhesions and stress-fiber formation. Shedding is enhanced by a number of factors such as heparanase, thrombin or EGF. Also by stress and wound healing. PMA-mediated shedding is inhibited by TIMP3. Post-translationally, O-glycosylated; contains both chondroitin sulfate and heparan sulfate. Ser-39, Ser-61 and Ser-63 can all be modified by either chondroitin sulfate or heparan sulfate, and the protein exists in forms that contain only chondroitin sulfate, only heparan sulfate and both chondroitin sulfate and heparan sulfate. In terms of tissue distribution, detected in fibroblasts (at protein level). Also expressed in epithelial cells.

It is found in the membrane. It localises to the secreted. Functionally, cell surface proteoglycan which regulates exosome biogenesis in concert with SDCBP and PDCD6IP. The protein is Syndecan-4 of Homo sapiens (Human).